The sequence spans 951 residues: Kinase suppressor of Ras 2 (951 aa).

The disordered stretch occupies residues 237–298 (PPPPPLESGH…PGTPPPSSRK (62 aa)). Low complexity predominate over residues 260 to 274 (RTPPRTPNIVTTVTP). Residues threonine 273 and threonine 277 each carry the phosphothreonine modification. A Phorbol-ester/DAG-type zinc finger spans residues 413-457 (KHRFSTKYWMSQTCTVCGKGMLFGLKCKNCKLKCHNKCTKEAPPC). The Zn(2+) site is built by histidine 414, cysteine 426, cysteine 429, cysteine 439, cysteine 442, histidine 447, cysteine 450, and cysteine 457. Serine 475 carries the phosphoserine; by MARK3 modification. Disordered regions lie at residues 489–559 (RYSD…QKKN) and 614–634 (EPTSENEESHNEAEESEDEFE). Residues 494-503 (HISQTLPKTN) show a composition bias toward polar residues. Threonine 498 is subject to Phosphothreonine. Low complexity predominate over residues 518-531 (SSSNPSSTTSSTPS). The span at 532 to 552 (SPAPPLPPSATPPSPLHPSPQ) shows a compositional bias: pro residues. Positions 667 to 932 (LEIGELIGKG…TKLMDMLEKL (266 aa)) constitute a Protein kinase domain. 673 to 681 (IGKGRFGQV) serves as a coordination point for ATP. Aspartate 787 functions as the Proton donor/acceptor in the catalytic mechanism. Lysine 789 and aspartate 804 together coordinate ATP.

This sequence belongs to the protein kinase superfamily. TKL Ser/Thr protein kinase family. As to quaternary structure, heterodimerizes (via N-terminus) with BRAF (via N-terminus) in a MAP2K1/MEK1-dependent manner. Interacts with BRAF; this increases the low intrinsic protein kinase activity of KSR2. Interacts with MAP2K1, forming a heterodimer that can dimerize to form a heterotetramer. Interacts with MAP3K8, MAPK, RAS and RAF. Phosphorylated on Ser-475 by MARK3.

It is found in the cytoplasm. It localises to the membrane. The catalysed reaction is L-seryl-[protein] + ATP = O-phospho-L-seryl-[protein] + ADP + H(+). The enzyme catalyses L-threonyl-[protein] + ATP = O-phospho-L-threonyl-[protein] + ADP + H(+). In terms of biological role, location-regulated scaffold connecting MEK to RAF. Has very low protein kinase activity and can phosphorylate MAP2K1 at several Ser and Thr residues with very low efficiency (in vitro). Acts as MAP2K1/MEK1-dependent allosteric activator of BRAF; upon binding to MAP2K1/MEK1, dimerizes with BRAF and promotes BRAF-mediated phosphorylation of MAP2K1/MEK1. Interaction with BRAF enhances KSR2-mediated phosphorylation of MAP2K1 (in vitro). Blocks MAP3K8 kinase activity and MAP3K8-mediated signaling. Acts as a negative regulator of MAP3K3-mediated activation of ERK, JNK and NF-kappa-B pathways, inhibiting MAP3K3-mediated interleukin-8 production. In Mus musculus (Mouse), this protein is Kinase suppressor of Ras 2.